Consider the following 736-residue polypeptide: Elongation factor 2 (736 aa).

The tr-type G domain occupies E18–R261. Residues A27–T34, D93–H97, and N147–D150 each bind GTP. H602 is subject to Diphthamide.

It belongs to the TRAFAC class translation factor GTPase superfamily. Classic translation factor GTPase family. EF-G/EF-2 subfamily.

It is found in the cytoplasm. Functionally, catalyzes the GTP-dependent ribosomal translocation step during translation elongation. During this step, the ribosome changes from the pre-translocational (PRE) to the post-translocational (POST) state as the newly formed A-site-bound peptidyl-tRNA and P-site-bound deacylated tRNA move to the P and E sites, respectively. Catalyzes the coordinated movement of the two tRNA molecules, the mRNA and conformational changes in the ribosome. This chain is Elongation factor 2, found in Desulfurococcus amylolyticus (strain DSM 18924 / JCM 16383 / VKM B-2413 / 1221n) (Desulfurococcus kamchatkensis).